We begin with the raw amino-acid sequence, 692 residues long: Elongation factor G (692 aa).

The tr-type G domain maps to 8–282 (ERTRNIGIMA…AIVDYLPAPT (275 aa)). GTP-binding positions include 17 to 24 (AHIDAGKT), 81 to 85 (DTPGH), and 135 to 138 (NKMD).

It belongs to the TRAFAC class translation factor GTPase superfamily. Classic translation factor GTPase family. EF-G/EF-2 subfamily.

The protein resides in the cytoplasm. Catalyzes the GTP-dependent ribosomal translocation step during translation elongation. During this step, the ribosome changes from the pre-translocational (PRE) to the post-translocational (POST) state as the newly formed A-site-bound peptidyl-tRNA and P-site-bound deacylated tRNA move to the P and E sites, respectively. Catalyzes the coordinated movement of the two tRNA molecules, the mRNA and conformational changes in the ribosome. This is Elongation factor G from Desulforamulus reducens (strain ATCC BAA-1160 / DSM 100696 / MI-1) (Desulfotomaculum reducens).